The primary structure comprises 430 residues: Probable aspartic-type endopeptidase ARB_07403 (430 aa).

Positions 1–17 (MHVSTLLVAVLLPLALS) are cleaved as a signal peptide. Residues 18–87 (KPTPRKKTGS…SKATAGSGKE (70 aa)) constitute a propeptide, activation peptide. Residues 66–105 (YHPQHISKLPGNSKATAGSGKEGVESQDEKGEVVNNPTNH) are disordered. The segment covering 87–97 (EGVESQDEKGE) has biased composition (basic and acidic residues). The Peptidase A1 domain occupies 109-427 (FLSPVTIGGQ…DQRGPSISLA (319 aa)). Asp125 is a catalytic residue. N-linked (GlcNAc...) asparagine glycosylation is present at Asn306. Asp314 is an active-site residue.

It belongs to the peptidase A1 family.

Its subcellular location is the secreted. In terms of biological role, probable secreted aspartic-type endopeptidase which contributes to virulence. This is Probable aspartic-type endopeptidase ARB_07403 from Arthroderma benhamiae (strain ATCC MYA-4681 / CBS 112371) (Trichophyton mentagrophytes).